The sequence spans 156 residues: UPF0336 protein SACE_6876 (156 aa).

The MaoC-like domain maps to 8-128 (IGREYPPTPA…DFLTVRAEIT (121 aa)).

This sequence belongs to the UPF0336 family.

The chain is UPF0336 protein SACE_6876 from Saccharopolyspora erythraea (strain ATCC 11635 / DSM 40517 / JCM 4748 / NBRC 13426 / NCIMB 8594 / NRRL 2338).